The sequence spans 866 residues: Probable LRR receptor-like serine/threonine-protein kinase At5g16900 (866 aa).

The first 20 residues, 1-20, serve as a signal peptide directing secretion; that stretch reads MEDRHRYLFFIFAIIHYVQA. Residues 21–515 lie on the Extracellular side of the membrane; that stretch reads QQGFISLDCG…SSSGNKETTV (495 aa). Asn137, Asn176, Asn230, Asn251, Asn331, Asn404, Asn409, and Asn436 each carry an N-linked (GlcNAc...) asparagine glycan. 3 LRR repeats span residues 415 to 438, 439 to 461, and 463 to 485; these read RIIS…QNLT, QLQK…LANM, and SLLF…LLDR. N-linked (GlcNAc...) asparagine glycosylation is found at Asn468 and Asn505. A helical membrane pass occupies residues 516–536; it reads IAPVAAAIAIFIAVLVLIIVF. The Cytoplasmic portion of the chain corresponds to 537 to 866; sequence IKKRPSSIRA…LNQVIDSKSS (330 aa). Residue Thr564 is modified to Phosphothreonine. A Protein kinase domain is found at 573-846; it reads NNFERVIGEG…HVVQELKQCI (274 aa). ATP is bound by residues 579 to 587 and Lys601; that span reads IGEGGFGVV. Position 646 is a phosphotyrosine (Tyr646). The active-site Proton acceptor is the Asp698. Ser732 carries the phosphoserine modification. Phosphothreonine occurs at positions 733 and 738. The residue at position 746 (Tyr746) is a Phosphotyrosine.

Belongs to the protein kinase superfamily. Ser/Thr protein kinase family.

The protein localises to the membrane. It catalyses the reaction L-seryl-[protein] + ATP = O-phospho-L-seryl-[protein] + ADP + H(+). The catalysed reaction is L-threonyl-[protein] + ATP = O-phospho-L-threonyl-[protein] + ADP + H(+). The chain is Probable LRR receptor-like serine/threonine-protein kinase At5g16900 from Arabidopsis thaliana (Mouse-ear cress).